A 223-amino-acid polypeptide reads, in one-letter code: Crossover junction endodeoxyribonuclease RuvC (223 aa).

Residues aspartate 12, glutamate 73, and aspartate 146 contribute to the active site. Mg(2+) is bound by residues aspartate 12, glutamate 73, and aspartate 146. The segment at 182-223 is disordered; the sequence is QGKLGKAKSTLNARNNAQVTGDAQVRAGHPSQFERPDRADPR. The segment covering 190–202 has biased composition (polar residues); sequence STLNARNNAQVTG. Residues 213 to 223 are compositionally biased toward basic and acidic residues; the sequence is QFERPDRADPR.

The protein belongs to the RuvC family. In terms of assembly, homodimer which binds Holliday junction (HJ) DNA. The HJ becomes 2-fold symmetrical on binding to RuvC with unstacked arms; it has a different conformation from HJ DNA in complex with RuvA. In the full resolvosome a probable DNA-RuvA(4)-RuvB(12)-RuvC(2) complex forms which resolves the HJ. Mg(2+) is required as a cofactor.

It localises to the cytoplasm. The catalysed reaction is Endonucleolytic cleavage at a junction such as a reciprocal single-stranded crossover between two homologous DNA duplexes (Holliday junction).. In terms of biological role, the RuvA-RuvB-RuvC complex processes Holliday junction (HJ) DNA during genetic recombination and DNA repair. Endonuclease that resolves HJ intermediates. Cleaves cruciform DNA by making single-stranded nicks across the HJ at symmetrical positions within the homologous arms, yielding a 5'-phosphate and a 3'-hydroxyl group; requires a central core of homology in the junction. The consensus cleavage sequence is 5'-(A/T)TT(C/G)-3'. Cleavage occurs on the 3'-side of the TT dinucleotide at the point of strand exchange. HJ branch migration catalyzed by RuvA-RuvB allows RuvC to scan DNA until it finds its consensus sequence, where it cleaves and resolves the cruciform DNA. The protein is Crossover junction endodeoxyribonuclease RuvC of Corynebacterium efficiens (strain DSM 44549 / YS-314 / AJ 12310 / JCM 11189 / NBRC 100395).